The sequence spans 455 residues: Major facilitator superfamily domain-containing protein 10 (455 aa).

The next 11 membrane-spanning stretches (helical) occupy residues 27 to 47, 86 to 106, 113 to 135, 148 to 168, 176 to 196, 202 to 222, 275 to 295, 310 to 327, 336 to 356, 359 to 379, and 421 to 441; these read VVFL…PLLP, VLFG…CAPL, CLGR…AVWA, LIGG…ADLG, GMAV…MLGA, MAPW…FCFL, LGLV…TLSF, KMFF…GAYA, VAAV…IGWG, LPVL…VVPC, and LAGA…PFFL.

This sequence belongs to the major facilitator superfamily. Expressed in luminal membrane of renal tubules (at protein level). Detected in all tissues tested with higher expression in heart, splee, kidney, leukocytes and prostate.

The protein resides in the nucleus inner membrane. It is found in the cell membrane. Its function is as follows. Probable organic anion transporter which may serve as a transporter for some non-steroidal anti-inflammatory drugs (NSAIDs) as well as other organic anions across the luminal membranes of renal proximal tubules at the final excretion step into the urine. The protein is Major facilitator superfamily domain-containing protein 10 (MFSD10) of Homo sapiens (Human).